The primary structure comprises 211 residues: MNKGIIGKKLGMTQIFLEDGTRVPVTVVQAGPCVVLQKKTAEVDGYSAVQVGFETVNAAKANSADRGHCVKAGKGVFRHLRELKLEQEAELNIGDELTVQQFEPGDLIDVTGTSIGKGFQGVIKRHNFKGGRASHGSRFHRAPGSIGCSATPSRVFKNKKMPGQMGNERVTVQRLQVVRVDADQNLILIKGAIPDSKNNVVVIKDSVKATK.

It belongs to the universal ribosomal protein uL3 family. In terms of assembly, part of the 50S ribosomal subunit. Forms a cluster with proteins L14 and L19.

One of the primary rRNA binding proteins, it binds directly near the 3'-end of the 23S rRNA, where it nucleates assembly of the 50S subunit. The chain is Large ribosomal subunit protein uL3 from Trichlorobacter lovleyi (strain ATCC BAA-1151 / DSM 17278 / SZ) (Geobacter lovleyi).